Reading from the N-terminus, the 421-residue chain is Imidazolonepropionase (421 aa).

Fe(3+)-binding residues include histidine 81 and histidine 83. 2 residues coordinate Zn(2+): histidine 81 and histidine 83. Residues arginine 90, tyrosine 153, and histidine 186 each coordinate 4-imidazolone-5-propanoate. Tyrosine 153 serves as a coordination point for N-formimidoyl-L-glutamate. Histidine 251 contributes to the Fe(3+) binding site. Histidine 251 provides a ligand contact to Zn(2+). Glutamate 254 is a binding site for 4-imidazolone-5-propanoate. Aspartate 326 lines the Fe(3+) pocket. A Zn(2+)-binding site is contributed by aspartate 326. Residues asparagine 328 and glycine 330 each coordinate N-formimidoyl-L-glutamate. Serine 331 lines the 4-imidazolone-5-propanoate pocket.

It belongs to the metallo-dependent hydrolases superfamily. HutI family. The cofactor is Zn(2+). It depends on Fe(3+) as a cofactor.

The protein localises to the cytoplasm. The enzyme catalyses 4-imidazolone-5-propanoate + H2O = N-formimidoyl-L-glutamate. It participates in amino-acid degradation; L-histidine degradation into L-glutamate; N-formimidoyl-L-glutamate from L-histidine: step 3/3. Its function is as follows. Catalyzes the hydrolytic cleavage of the carbon-nitrogen bond in imidazolone-5-propanoate to yield N-formimidoyl-L-glutamate. It is the third step in the universal histidine degradation pathway. This chain is Imidazolonepropionase, found in Streptococcus pyogenes serotype M2 (strain MGAS10270).